Reading from the N-terminus, the 263-residue chain is Small ribosomal subunit protein eS4, Y isoform 1 (263 aa).

The S4 RNA-binding domain maps to 42–104 (LPLIIFLRNR…TGEHFRLVYD (63 aa)).

This sequence belongs to the eukaryotic ribosomal protein eS4 family.

In Macaca fuscata fuscata (Japanese macaque), this protein is Small ribosomal subunit protein eS4, Y isoform 1 (RPS4Y1).